Reading from the N-terminus, the 254-residue chain is Ribonuclease HII (254 aa).

Residues 70-254 form the RNase H type-2 domain; that stretch reads TCIAGIDEAG…SFAPVKSVIS (185 aa). 3 residues coordinate a divalent metal cation: D76, E77, and D168.

It belongs to the RNase HII family. It depends on Mn(2+) as a cofactor. Mg(2+) serves as cofactor.

It localises to the cytoplasm. The catalysed reaction is Endonucleolytic cleavage to 5'-phosphomonoester.. In terms of biological role, endonuclease that specifically degrades the RNA of RNA-DNA hybrids. The chain is Ribonuclease HII from Bacillus pumilus (strain SAFR-032).